A 530-amino-acid polypeptide reads, in one-letter code: Glucose-6-phosphate isomerase (530 aa).

The active-site Proton donor is the Glu356. Residues His387 and Lys502 contribute to the active site.

The protein belongs to the GPI family.

It is found in the cytoplasm. The catalysed reaction is alpha-D-glucose 6-phosphate = beta-D-fructose 6-phosphate. It participates in carbohydrate biosynthesis; gluconeogenesis. Its pathway is carbohydrate degradation; glycolysis; D-glyceraldehyde 3-phosphate and glycerone phosphate from D-glucose: step 2/4. In terms of biological role, catalyzes the reversible isomerization of glucose-6-phosphate to fructose-6-phosphate. This is Glucose-6-phosphate isomerase from Borreliella burgdorferi (strain ATCC 35210 / DSM 4680 / CIP 102532 / B31) (Borrelia burgdorferi).